The primary structure comprises 38 residues: Large ribosomal subunit protein bL36 (38 aa).

The protein belongs to the bacterial ribosomal protein bL36 family.

This Fervidobacterium nodosum (strain ATCC 35602 / DSM 5306 / Rt17-B1) protein is Large ribosomal subunit protein bL36.